A 186-amino-acid polypeptide reads, in one-letter code: MMRPVSSSNVAFCTSGKSSCLNQDTMRGVDQFGLYATQQSKYSHPVTHKNISCQTQETINETHLQTSTSRDLDTKSDLKKKKNLGRSGKRGRPSGTTKSAGYRTSTGRPLGTTKAAGFKTSPGRPLGTTKAAGYKVSPGRPPGSIKALSRLANLGYPSNNAGFSYPTALSRGLHSAVETTLKHPIE.

The span at 60–69 (NETHLQTSTS) shows a compositional bias: polar residues. The disordered stretch occupies residues 60–140 (NETHLQTSTS…AAGYKVSPGR (81 aa)). The span at 78–92 (LKKKKNLGRSGKRGR) shows a compositional bias: basic residues. A compositionally biased stretch (polar residues) spans 94–107 (SGTTKSAGYRTSTG).

Belongs to the UPF0461 family.

The polypeptide is UPF0461 protein C5orf24 homolog (Xenopus tropicalis (Western clawed frog)).